Consider the following 184-residue polypeptide: Elongation factor P (184 aa).

The protein belongs to the elongation factor P family.

It localises to the cytoplasm. It participates in protein biosynthesis; polypeptide chain elongation. Functionally, involved in peptide bond synthesis. Stimulates efficient translation and peptide-bond synthesis on native or reconstituted 70S ribosomes in vitro. Probably functions indirectly by altering the affinity of the ribosome for aminoacyl-tRNA, thus increasing their reactivity as acceptors for peptidyl transferase. The chain is Elongation factor P from Polaromonas sp. (strain JS666 / ATCC BAA-500).